Here is a 453-residue protein sequence, read N- to C-terminus: Tol-Pal system protein TolB (453 aa).

The signal sequence occupies residues 1–31 (MINNLSVSMTKVLKIILTIIIILFNTLSILA).

The protein belongs to the TolB family. As to quaternary structure, the Tol-Pal system is composed of five core proteins: the inner membrane proteins TolA, TolQ and TolR, the periplasmic protein TolB and the outer membrane protein Pal. They form a network linking the inner and outer membranes and the peptidoglycan layer.

It localises to the periplasm. In terms of biological role, part of the Tol-Pal system, which plays a role in outer membrane invagination during cell division and is important for maintaining outer membrane integrity. In Orientia tsutsugamushi (strain Boryong) (Rickettsia tsutsugamushi), this protein is Tol-Pal system protein TolB.